We begin with the raw amino-acid sequence, 56 residues long: Small ribosomal subunit protein uS14 (56 aa).

4 residues coordinate Zn(2+): C21, C24, C39, and C42.

The protein belongs to the universal ribosomal protein uS14 family. As to quaternary structure, component of the 40S small ribosomal subunit. Requires Zn(2+) as cofactor.

It localises to the cytoplasm. The protein resides in the cytosol. The protein localises to the rough endoplasmic reticulum. This is Small ribosomal subunit protein uS14 (RpS29) from Culex quinquefasciatus (Southern house mosquito).